The following is a 200-amino-acid chain: LexA repressor (200 aa).

Residues S121 and K158 each act as for autocatalytic cleavage activity in the active site.

This sequence belongs to the peptidase S24 family. In terms of assembly, homodimer.

The catalysed reaction is Hydrolysis of Ala-|-Gly bond in repressor LexA.. Binds a consensus sequence 5'-TGTTC-N(4)-GAACA-3'; some genes have a tandem consensus sequence and their binding is cooperative. Binds to the promoters of a number of genes, including lexA and splB. Represses a number of genes involved in the response to DNA damage (SOS response). The protein is LexA repressor of Opitutus terrae (strain DSM 11246 / JCM 15787 / PB90-1).